Reading from the N-terminus, the 540-residue chain is MLRNLLLLLLPLLIEAKLPPFFLGRLNGKTLLNHHLDRLTASDGASIQETYPNLQVHNFTQKLDHFDPYNTKTWNQKYFYNPVFSRNNSIIFLMIGGEGPENGKWAANPNVQYLQWAKEFGADVFDLEHRFFGDSWPIPDMQTSSLRYLTTQQALADLAFFIEFMNQQYGFKNPRWVTFGGSYPGSLAAWFRQKYPQLTVGSVASSAPVNLKLDFYEYAMVVEDDLRITDPKCAQATKDAFVQMQKLALTAEGRNSLNNHFNLQPPFDANTTKLDINNFFGNIFNTYQGMTQYTYDGQSNSTHSDKTVRKMCDIMTNATETDVVMRVENLFLWFNQMEPASANLTVMPNSYWDVISQVGSGDLNVLGPDGAAARGWMWLCCNEIGFLQTTNQGNNVFGTGVPLNLFIDMCTDMFGDSMKMSQIMGGNKKSQNYYGGADFYNATNVVLPNGSLDPWHALGTYGTIKSQSLLPYLINGTAHCGDMYPSYDGEPGSLLAARAFVKENVRQFIRYDPNVDGPGGSSSSASLFVVAYIVCGFLFV.

A signal peptide spans 1-16 (MLRNLLLLLLPLLIEA). 2 N-linked (GlcNAc...) asparagine glycosylation sites follow: asparagine 58 and asparagine 87. Residue serine 182 is the Charge relay system of the active site. N-linked (GlcNAc...) asparagine glycans are attached at residues asparagine 270, asparagine 300, asparagine 317, asparagine 343, asparagine 441, and asparagine 449. Aspartate 453 functions as the Charge relay system in the catalytic mechanism. The N-linked (GlcNAc...) asparagine glycan is linked to asparagine 475. Histidine 479 serves as the catalytic Charge relay system.

It belongs to the peptidase S28 family.

This is Putative serine protease F56F10.1 from Caenorhabditis elegans.